The primary structure comprises 220 residues: CRISPR system Cms endoribonuclease Csm3 (220 aa).

Belongs to the CRISPR-associated Csm3 family. Part of the Csm effector complex that includes at least Cas10(1), Csm2(3), Csm3(5), Csm4(1), Csm5(1) and mature crRNA. The Csm complex is elongated and slightly twisted with a maximal length of 215 Angstroms and a diameter of 75-80 Angstroms. It has been modeled to have a central protein filamant of Csm3 subunits along which the dsRNA helix of paired crRNA and target RNA binds. The filament is capped at one end by Cas10 and Csm4 and at the other end by Csm5; ssDNA is thought to bind to the N-terminal HD domain of Cas10. Csm with a precursor crRNA does not include Csm5, while Cas6, the enzyme probably involved in pre-crRNA processing, is found associated with a subset of the Csm complex. It depends on a metal cation as a cofactor.

Its activity is regulated as follows. Target ssRNase is inhibited by EDTA. In terms of biological role, CRISPR (clustered regularly interspaced short palindromic repeat) is an adaptive immune system that provides protection against mobile genetic elements (viruses, transposable elements and conjugative plasmids). CRISPR clusters contain spacers, sequences complementary to antecedent mobile elements, and target invading nucleic acids. CRISPR clusters are transcribed and processed into CRISPR RNA (crRNA). The type III-A Csm effector complex binds crRNA and acts as a crRNA-guided RNase, DNase and cyclic oligoadenylate synthase; binding of target RNA cognate to the crRNA is required for all activities. In a heterologous host this Csm effector complex restricts ssRNA phage MS2, suggesting it may target RNA viruses in vivo. Functionally, csm functions as a non-specific ssDNase. Base-pairing between crRNA and target RNA to form a ternary Csm complex activates a ssDNase activity; target RNA cleavage suppresses the ssDNase, a temporal control that prevents uncontrolled DNA degradation. Viral RNA transcripts probably tether the Csm complex to the viral genome, recruiting Cas10 ssDNA activity which is able to degrade DNA in the transcription bubble, spatially controlling the DNase activity. This subunit has the target ssRNA endonuclease activity; it cleaves multiple sites in the target RNA at 6 nucleotide intervals. The number of cleavage sites in the target RNA correlates with the number of Csm3 subunits in the Csm effector complex. In the Csm complex target RNA and ssDNA are cleaved simultaneously, although RNase activity (of Csm3) is much faster. RNA cleavage by Csm3 is not required for ssDNase activity as Csm complex with inactive Csm3 still has ssDNase activity; however as the cleaved target RNA products dissociate away ssDNase activity decreases. The polypeptide is CRISPR system Cms endoribonuclease Csm3 (Streptococcus thermophilus).